A 91-amino-acid polypeptide reads, in one-letter code: MTRSLKKGPFCDAHLVKKVETAQAIKDKKPIKTWSRRSTIMPDFIGLTIAVHNGKQHVPVYVSENMVGHKLGEFALTRTFKGHAADKKAKK.

This sequence belongs to the universal ribosomal protein uS19 family.

Its function is as follows. Protein S19 forms a complex with S13 that binds strongly to the 16S ribosomal RNA. The chain is Small ribosomal subunit protein uS19 from Janthinobacterium sp. (strain Marseille) (Minibacterium massiliensis).